Here is a 121-residue protein sequence, read N- to C-terminus: Putative membrane protein insertion efficiency factor (121 aa).

Belongs to the UPF0161 family.

It localises to the cell membrane. Functionally, could be involved in insertion of integral membrane proteins into the membrane. The polypeptide is Putative membrane protein insertion efficiency factor (Rhodococcus opacus (strain B4)).